A 486-amino-acid polypeptide reads, in one-letter code: Elastin-binding protein EbpS (486 aa).

The segment covering 1 to 40 (MSNNFKDDFEKNRQSIDTNSHQDHTEDVEKDQSELEHQDT) has biased composition (basic and acidic residues). The interval 1–314 (MSNNFKDDFE…HHDRDKERKK (314 aa)) is disordered. Topologically, residues 2 to 204 (SNNFKDDFEK…ESKDHHSGKK (203 aa)) are extracellular. The elastin-binding stretch occupies residues 14–34 (QSIDTNSHQDHTEDVEKDQSE). Residues 64–85 (TNHNKQVHNESQTSEDNVQNEA) show a composition bias toward polar residues. Composition is skewed to basic and acidic residues over residues 103-117 (EPSH…EEGY), 126-160 (DKSH…KSEA), and 180-199 (SKDK…SKDH). Over residues 204 to 225 (KGAAIGAGTAGVAGAAGAMGVS) the composition is skewed to low complexity. Residues 205–225 (GAAIGAGTAGVAGAAGAMGVS) form a helical membrane-spanning segment. Topologically, residues 226 to 319 (KAKKHSNDAQ…KERKKGGMAK (94 aa)) are cytoplasmic. A compositionally biased stretch (polar residues) spans 233 to 246 (DAQNKSNSGKVNNS). Residues 247 to 259 (TEDKASEDKSKEH) are compositionally biased toward basic and acidic residues. Positions 278-297 (GAASNSASAASKPHASNNAS) are enriched in low complexity. The segment covering 300-314 (NDEHDHHDRDKERKK) has biased composition (basic and acidic residues). A helical membrane pass occupies residues 320–340 (VLLPLIAAVLIIGALAIFGGM). Residues 341–486 (ALNNHNNGTK…IRNGQQIVIP (146 aa)) are Extracellular-facing. The disordered stretch occupies residues 351–440 (ENKIANTNKN…QRQGGGQRHT (90 aa)). Over residues 361–398 (NADESKDKDTSKDASKDKSKSTDSDKSKDDQDKATKDE) the composition is skewed to basic and acidic residues. Low complexity predominate over residues 403-431 (QNNANQANNQAQNNQNQQQANQNQQQQQQ). The 49-residue stretch at 437–485 (QRHTVNGQENLYRIAIQYYGSGSPENVEKIRRANGLSGNNIRNGQQIVI) folds into the LysM domain.

It localises to the cell membrane. In terms of biological role, promotes binding of soluble elastin peptides and tropoelastin to S.aureus cells although it is not able to promote bacterial adherence to immobilized elastin and, therefore, is not a microbial surface component recognizing adhesive matrix molecule (MSCRAMM). This Staphylococcus aureus (strain MRSA252) protein is Elastin-binding protein EbpS (ebpS).